The chain runs to 288 residues: Capsid protein (288 aa).

Alanine 2 is modified (N-acetylalanine; by host).

The protein belongs to the high plain virus capsid family.

Its subcellular location is the virion. The polypeptide is Capsid protein (High plains virus (isolate Kansas 2004)).